Reading from the N-terminus, the 201-residue chain is Glycerol-3-phosphate acyltransferase (201 aa).

Transmembrane regions (helical) follow at residues 10–30, 60–80, 86–106, 116–136, and 166–186; these read MLIG…GLIL, LAAA…LIAA, AAIA…WIGF, LGVL…AWIV, and ALAA…RANI.

The protein belongs to the PlsY family. As to quaternary structure, probably interacts with PlsX.

The protein resides in the cell inner membrane. The catalysed reaction is an acyl phosphate + sn-glycerol 3-phosphate = a 1-acyl-sn-glycero-3-phosphate + phosphate. It participates in lipid metabolism; phospholipid metabolism. Its function is as follows. Catalyzes the transfer of an acyl group from acyl-phosphate (acyl-PO(4)) to glycerol-3-phosphate (G3P) to form lysophosphatidic acid (LPA). This enzyme utilizes acyl-phosphate as fatty acyl donor, but not acyl-CoA or acyl-ACP. The protein is Glycerol-3-phosphate acyltransferase of Brucella abortus (strain 2308).